Consider the following 579-residue polypeptide: Nif-specific regulatory protein (579 aa).

A GAF domain is found at 40–187 (DPVAEVPQIF…MVASLLEQAL (148 aa)). The Sigma-54 factor interaction domain maps to 226–454 (IVGSSPAIAE…LENCVNRAAA (229 aa)). ATP is bound by residues 254 to 261 (GESGTGKE) and 317 to 326 (ADGGTLFLDE). Residues 464 to 536 (EELACRQGAC…PLRTKTAQLS (73 aa)) are inter-domain linker. Residues cysteine 468 and cysteine 473 each coordinate a divalent metal cation. The disordered stretch occupies residues 502–529 (RVSAPPPEPAPAPEPAPEAPPREEVPLR). 7 consecutive repeat copies span residues 505-506 (AP), 507-508 (PP), 509-510 (EP), 511-512 (AP), 513-514 (AP), 515-516 (EP), and 517-518 (AP). Positions 505–518 (APPPEPAPAPEPAP) are 7 X 2 AA tandem repeats of X-P. The segment covering 505-520 (APPPEPAPAPEPAPEA) has biased composition (pro residues). Residues 537–579 (REELLRALESAGWVQAKAARLLGMTPRQIAYALQKFEIELRKI) are C-terminal DNA-binding domain. Residues 551-570 (QAKAARLLGMTPRQIAYALQ) constitute a DNA-binding region (H-T-H motif).

Interacts with sigma-54.

In terms of biological role, required for activation of most nif operons, which are directly involved in nitrogen fixation. The chain is Nif-specific regulatory protein (nifA1) from Rhodobacter capsulatus (Rhodopseudomonas capsulata).